We begin with the raw amino-acid sequence, 164 residues long: Lipocalin-like 1 protein (164 aa).

The protein belongs to the calycin superfamily. Lipocalin family.

The protein is Lipocalin-like 1 protein (LCNL1) of Homo sapiens (Human).